The following is a 134-amino-acid chain: Acyl carrier protein, chloroplastic (134 aa).

The N-terminal 51 residues, 1-51 (MSTTFCSSVSMQATSLAATTRISFQKPGLVSRTNLSFNLRRSIPTRLSVSC), are a transit peptide targeting the chloroplast. Residues 55–130 (PETVEKVSKI…EAAELIEELV (76 aa)) form the Carrier domain. Position 90 is an O-(pantetheine 4'-phosphoryl)serine (S90).

This sequence belongs to the acyl carrier protein (ACP) family. Post-translationally, 4'-phosphopantetheine is transferred from CoA to a specific serine of apo-ACP by acpS. This modification is essential for activity because fatty acids are bound in thioester linkage to the sulfhydryl of the prosthetic group. Seed.

The protein resides in the plastid. It localises to the chloroplast. It functions in the pathway lipid metabolism; fatty acid biosynthesis. Functionally, carrier of the growing fatty acid chain in fatty acid biosynthesis. The sequence is that of Acyl carrier protein, chloroplastic (ACL1.A2) from Brassica napus (Rape).